The following is a 306-amino-acid chain: Mitochondrial uncoupling protein 1 (306 aa).

Solcar repeat units follow at residues Leu-9–Leu-102, Val-112–Thr-203, and Asp-212–Tyr-296. 6 consecutive transmembrane segments (helical) span residues Phe-15–Ala-35, Leu-71–Leu-91, Ile-118–Val-138, Thr-177–Tyr-197, Ile-218–Val-238, and Tyr-269–Thr-289.

Belongs to the mitochondrial carrier (TC 2.A.29) family. As to expression, widely expressed.

The protein localises to the mitochondrion inner membrane. Its function is as follows. PUMPS are mitochondrial transporter proteins that create proton leaks across the inner mitochondrial membrane, thus uncoupling oxidative phosphorylation. This leads to a decrease in the efficiency of oxidative phosphorylation and an increase in heat production. Is involved in protecting plant cells against oxidative stress damage and maintaining the redox balance of the mitochondrial electron transport chain to facilitate photosynthetic metabolism. May play a regulatory role during photorespiration. This chain is Mitochondrial uncoupling protein 1 (PUMP1), found in Arabidopsis thaliana (Mouse-ear cress).